The primary structure comprises 359 residues: 3-dehydroquinate synthase (359 aa).

Residues 72-77 (EGEIHK), 106-110 (GVIGD), 130-131 (TS), lysine 143, lysine 152, and 170-173 (CLKT) each bind NAD(+). Positions 185, 248, and 264 each coordinate Zn(2+).

The protein belongs to the sugar phosphate cyclases superfamily. Dehydroquinate synthase family. Co(2+) serves as cofactor. The cofactor is Zn(2+). Requires NAD(+) as cofactor.

It localises to the cytoplasm. The catalysed reaction is 7-phospho-2-dehydro-3-deoxy-D-arabino-heptonate = 3-dehydroquinate + phosphate. The protein operates within metabolic intermediate biosynthesis; chorismate biosynthesis; chorismate from D-erythrose 4-phosphate and phosphoenolpyruvate: step 2/7. Functionally, catalyzes the conversion of 3-deoxy-D-arabino-heptulosonate 7-phosphate (DAHP) to dehydroquinate (DHQ). The chain is 3-dehydroquinate synthase from Dehalococcoides mccartyi (strain ATCC BAA-2266 / KCTC 15142 / 195) (Dehalococcoides ethenogenes (strain 195)).